Here is a 186-residue protein sequence, read N- to C-terminus: uncharacterized protein (186 aa).

Residues 89–164 (LMSLGIGEDI…NTPLKLYSIY (76 aa)) enclose the Cupin type-2 domain. 117–124 (GIVKMGKS) provides a ligand contact to ATP.

This is an uncharacterized protein from Bacillus subtilis (strain 168).